We begin with the raw amino-acid sequence, 165 residues long: Pyruvoyl-dependent arginine decarboxylase (165 aa).

The residue at position 53 (Ser53) is a Pyruvic acid (Ser).

The protein belongs to the PdaD family. Trimer of an alpha-beta dimer. It depends on pyruvate as a cofactor.

It carries out the reaction L-arginine + H(+) = agmatine + CO2. This Methanocaldococcus jannaschii (strain ATCC 43067 / DSM 2661 / JAL-1 / JCM 10045 / NBRC 100440) (Methanococcus jannaschii) protein is Pyruvoyl-dependent arginine decarboxylase (pdaD).